A 292-amino-acid chain; its full sequence is MIAGSMVALVTPMDAQGRLDWDSLSKLVDFHLQEGTHAIVAVGTTGESATLDVNEHIEVIRRVVTQVAGRIPVIAGTGANSTREAVELTTNAKNAGADACLLVTPYYNKPTQEGLFQHFSHIANAVDIPQILYNVPGRTACDMLPETVARLSTVKNIVGIKEATGNLQRAKDILASVSSDFLVYSGDDATAVELMLLGGKGNISVTANVAPRAMSDLCAAAMRGDAQTARAIHEKLMPLNNTLFIESNPIPVKWALHEMGLMPDGIRLPLTWLSEACHEPLRQAMRQSGVLV.

Thr45 contacts pyruvate. Catalysis depends on Tyr133, which acts as the Proton donor/acceptor. The Schiff-base intermediate with substrate role is filled by Lys161. Ile203 contributes to the pyruvate binding site.

This sequence belongs to the DapA family. As to quaternary structure, homodimer.

It localises to the cytoplasm. The catalysed reaction is L-aspartate 4-semialdehyde + pyruvate = (2S,4S)-4-hydroxy-2,3,4,5-tetrahydrodipicolinate + H2O + H(+). It participates in amino-acid biosynthesis; L-lysine biosynthesis via DAP pathway; (S)-tetrahydrodipicolinate from L-aspartate: step 3/4. Its function is as follows. Catalyzes the condensation of (S)-aspartate-beta-semialdehyde [(S)-ASA] and pyruvate to 4-hydroxy-tetrahydrodipicolinate (HTPA). The polypeptide is 4-hydroxy-tetrahydrodipicolinate synthase (Pseudomonas syringae pv. syringae (strain B728a)).